We begin with the raw amino-acid sequence, 352 residues long: tRNA pseudouridine synthase D (352 aa).

The active-site Nucleophile is the Asp78. Residues 153–299 enclose the TRUD domain; sequence GVPNYYGEQR…LDQDRRPLLL (147 aa).

This sequence belongs to the pseudouridine synthase TruD family.

It carries out the reaction uridine(13) in tRNA = pseudouridine(13) in tRNA. Responsible for synthesis of pseudouridine from uracil-13 in transfer RNAs. The protein is tRNA pseudouridine synthase D of Aeromonas salmonicida (strain A449).